A 338-amino-acid polypeptide reads, in one-letter code: Putative ankyrin repeat protein CBU_0781 (338 aa).

A disordered region spans residues 1–31 (MSRRETPTSTISSTPTGTRTPRRRLSRKGHP). Positions 7-19 (PTSTISSTPTGTR) are enriched in low complexity. Basic residues predominate over residues 20–31 (TPRRRLSRKGHP). 2 ANK repeats span residues 92–124 (QGDTLLIKAAKKGKFLIAKALLEAGAYKEIVNK) and 125–157 (LGETALICAVRHFRVETLDLLIQYHADVKIKYK). The stretch at 197-242 (SQIMASDKEIDEIIRNARNLQIIKKEKREAEERARTKKSKQITLQR) forms a coiled coil. The tract at residues 319-338 (KKEDTTLSRNNSLSCLSSPR) is disordered. Residues 325 to 338 (LSRNNSLSCLSSPR) show a composition bias toward low complexity.

This is Putative ankyrin repeat protein CBU_0781 from Coxiella burnetii (strain RSA 493 / Nine Mile phase I).